Reading from the N-terminus, the 938-residue chain is Glutamate receptor ionotropic, NMDA 1 (938 aa).

The signal sequence occupies residues 1–18 (MSTMHLLTFALLFSCSFA). Over 19-559 (RAACDPKIVN…TLDSFMQPFQ (541 aa)) the chain is Extracellular. N-linked (GlcNAc...) asparagine glycans are attached at residues Asn-61, Asn-203, Asn-239, Asn-276, Asn-300, Asn-350, Asn-368, Asn-440, Asn-471, and Asn-491. Cys-79 and Cys-308 are joined by a disulfide. Disulfide bonds link Cys-420–Cys-454 and Cys-436–Cys-455. Residues Pro-516, Thr-518, and Arg-523 each coordinate glycine. The helical transmembrane segment at 560–580 (STLWLLVGLSVHVVAVMLYLL) threads the bilayer. Residues 581 to 602 (DRFSPFGRFKVNSEEEEEDALT) are Cytoplasmic-facing. The segment at residues 603-624 (LSSAMWFSWGVLLNSGIGEGAP) is an intramembrane region (discontinuously helical). The segment at 603–624 (LSSAMWFSWGVLLNSGIGEGAP) is pore-forming. The Cytoplasmic segment spans residues 625–630 (RSFSAR). Residues 631–647 (ILGMVWAGFAMIIVASY) form a helical membrane-spanning segment. Over 648 to 812 (TANLAAFLVL…NAPATLTFEN (165 aa)) the chain is Extracellular. Asn-674 carries N-linked (GlcNAc...) asparagine glycosylation. Residues Ser-688 and Asp-732 each coordinate glycine. A disulfide bond links Cys-744 and Cys-798. Residue Asn-771 is glycosylated (N-linked (GlcNAc...) asparagine). The helical transmembrane segment at 813-833 (MAGVFMLVAGGIVAGIFLIFI) threads the bilayer. Residues 834-938 (EIAYKRHKDA…LQLCSRHRES (105 aa)) lie on the Cytoplasmic side of the membrane. Position 889 is a phosphoserine; by PKC (Ser-889). The segment at 889–938 (SSFKRRRSSKDTSTGGGRGALQNQKDTVLPRRAIEREEGQLQLCSRHRES) is disordered. Ser-890 carries the phosphoserine modification. Phosphoserine; by PKC occurs at positions 896 and 897. The span at 916-927 (VLPRRAIEREEG) shows a compositional bias: basic and acidic residues.

It belongs to the glutamate-gated ion channel (TC 1.A.10.1) family. NR1/GRIN1 subfamily. As to quaternary structure, heterotetramer; the NMDAR subunits are modular and harbor tiered domains that function in concert to regulate opening and closing of the cation-selective ion channel pore. Forms heterotetrameric channels composed of two GluN1/zeta subunits (GRIN1), and two identical GluN2/epsilon subunits (GRIN2A, GRIN2B, GRIN2C or GRIN2D) or GluN3 subunits (GRIN3A or GRIN3B) (in vitro). Can also form heterotetrameric channels that contain at least two GluN1 subunits and at least two different GluN2 subunits (or a combination of one GluN2 and one GluN3 subunits) (in vitro). In vivo, the subunit composition may vary in function of the expression levels of the different subunits. Found in a complex with GRIN2A or GRIN2B, GRIN3A and PPP2CB. Found in a complex with GRIN2A or GRIN2B and GRIN3B. Interacts with SNX27 (via PDZ domain); the interaction is required for recycling to the plasma membrane when endocytosed and prevent degradation in lysosomes. Interacts with DLG4 and MPDZ. Interacts with LRFN1 and LRFN2. Interacts with MYZAP. Found in a complex with DLG4 and PRR7. Found in a complex with GRIN2B and PRR7. Interacts with PRR7; the interaction is reduced following NMDA receptor activity. NMDA is probably regulated by C-terminal phosphorylation of an isoform of GRIN1 by PKC. Dephosphorylated on Ser-897 probably by protein phosphatase 2A (PPP2CB). Its phosphorylated state is influenced by the formation of the NMDAR-PPP2CB complex and the NMDAR channel activity. Detected in brain (at protein level). Detected in brain.

Its subcellular location is the cell membrane. The protein resides in the postsynaptic cell membrane. It is found in the postsynaptic density membrane. The protein localises to the synaptic cell membrane. It catalyses the reaction Ca(2+)(in) = Ca(2+)(out). The catalysed reaction is Na(+)(in) = Na(+)(out). It carries out the reaction K(+)(in) = K(+)(out). In terms of biological role, component of N-methyl-D-aspartate (NMDA) receptors (NMDARs) that function as heterotetrameric, ligand-gated cation channels with high calcium permeability and voltage-dependent block by Mg(2+). NMDARs participate in synaptic plasticity for learning and memory formation by contributing to the long-term potentiation (LTP). Channel activation requires binding of the neurotransmitter L-glutamate to the GluN2 subunit, glycine or D-serine binding to the GluN1 subunit, plus membrane depolarization to eliminate channel inhibition by Mg(2+). NMDARs mediate simultaneously the potasium efflux and the influx of calcium and sodium. Each GluN2 or GluN3 subunit confers differential attributes to channel properties, including activation, deactivation and desensitization kinetics, pH sensitivity, Ca2(+) permeability, and binding to allosteric modulators. In Mus musculus (Mouse), this protein is Glutamate receptor ionotropic, NMDA 1.